Here is a 587-residue protein sequence, read N- to C-terminus: Branchpoint-bridging protein (587 aa).

Over residues 1-16 (MLNSRSVGSTGSNNTP) the composition is skewed to polar residues. Disordered stretches follow at residues 1–64 (MLNS…DGRG) and 121–142 (GDVVPHHRERSPSPPPQYDNHG). Basic and acidic residues predominate over residues 44–64 (DSYKSNSRMDHRPDGYHDGRG). A phosphoserine mark is found at Ser131 and Ser133. The 81-residue stretch at 191–271 (YVPVKDYPEI…DKINHAIKLI (81 aa)) folds into the KH domain. 2 CCHC-type zinc fingers span residues 309–326 (QVCQNCGNVGHRRFDCPE) and 334–351 (IVCRHCGSIGHIARDCPV). Disordered stretches follow at residues 375–490 (GGGS…PGTS) and 551–587 (IPGATAPPGAPGSYNTSESSNLNAPPGVSMPNGYSNR). Polar residues predominate over residues 379–399 (AISNGNGEPQKSIEFSESGAA). Low complexity predominate over residues 410–454 (AAASTSVSSSTSSPAPWAKPASSAAPSNPAPWQQPAAPQSAPALS). Composition is skewed to polar residues over residues 465–483 (QPTQQSAVQPSNLVPSQNA) and 563–573 (SYNTSESSNLN).

Belongs to the BBP/SF1 family. In terms of assembly, U2AF large subunit (u2af59), U2AF small subunit (u2af23) and bpb1 interact to form a complex required for complex A formation.

The protein localises to the cytoplasm. Its subcellular location is the nucleus. In terms of biological role, necessary for the splicing of pre-mRNA. The BPB1(SF1)-u2af59-u2af23 complex has a role in the recognition of the branch site (5'-UACUAAC-3'), the pyrimidine tract and the 3'-splice site at the 3'-end of introns. This chain is Branchpoint-bridging protein (bpb1), found in Schizosaccharomyces pombe (strain 972 / ATCC 24843) (Fission yeast).